We begin with the raw amino-acid sequence, 101 residues long: NAD(P)H-quinone oxidoreductase subunit 4L, chloroplastic (101 aa).

The next 3 membrane-spanning stretches (helical) occupy residues M2 to I22, M32 to F52, and I61 to V81.

Belongs to the complex I subunit 4L family. NDH is composed of at least 16 different subunits, 5 of which are encoded in the nucleus.

The protein resides in the plastid. It is found in the chloroplast thylakoid membrane. The catalysed reaction is a plastoquinone + NADH + (n+1) H(+)(in) = a plastoquinol + NAD(+) + n H(+)(out). It carries out the reaction a plastoquinone + NADPH + (n+1) H(+)(in) = a plastoquinol + NADP(+) + n H(+)(out). Functionally, NDH shuttles electrons from NAD(P)H:plastoquinone, via FMN and iron-sulfur (Fe-S) centers, to quinones in the photosynthetic chain and possibly in a chloroplast respiratory chain. The immediate electron acceptor for the enzyme in this species is believed to be plastoquinone. Couples the redox reaction to proton translocation, and thus conserves the redox energy in a proton gradient. In Daucus carota (Wild carrot), this protein is NAD(P)H-quinone oxidoreductase subunit 4L, chloroplastic.